The sequence spans 273 residues: GDNF family receptor alpha-4 (273 aa).

N-linked (GlcNAc...) asparagine glycosylation is present at N192. N250 carries GPI-anchor amidated asparagine lipidation. The propeptide at 251–273 is removed in mature form; that stretch reads AGCCFLWVSSMSILTALALQALL.

The protein belongs to the GDNFR family. As to quaternary structure, interacts with ARTN ligand and RET: forms a 2:2:2 ternary complex composed of ARTN ligand, GFRA3 and RET receptor. Interacts with SORL1. As to expression, weakly expressed in heart, brain and testis.

It is found in the cell membrane. The protein localises to the secreted. Its function is as follows. Receptor for persephin (PSPN), a growth factor that exhibits neurotrophic activity on mesencephalic dopaminergic and motor neurons. Acts by binding to its coreceptor, GFRA4, leading to autophosphorylation and activation of the RET receptor. May be important in C-cell development and, in the postnatal development of the adrenal medulla. In Rattus norvegicus (Rat), this protein is GDNF family receptor alpha-4 (Gfra4).